Reading from the N-terminus, the 158-residue chain is Transcriptional repressor NrdR (158 aa).

The segment at 3-34 is a zinc-finger region; it reads CPSCQNTDSRVLESRAADGGRSVRRRRECLNC. Positions 49–139 constitute an ATP-cone domain; that stretch reads ITVIKRDGCR…VYRQFRGIDD (91 aa).

This sequence belongs to the NrdR family. It depends on Zn(2+) as a cofactor.

Negatively regulates transcription of bacterial ribonucleotide reductase nrd genes and operons by binding to NrdR-boxes. The sequence is that of Transcriptional repressor NrdR from Synechococcus sp. (strain CC9902).